The primary structure comprises 271 residues: Small ribosomal subunit protein uS2 (271 aa).

The segment covering 229 to 242 has biased composition (basic and acidic residues); the sequence is KERKGKDAEEELKK. The interval 229 to 271 is disordered; sequence KERKGKDAEEELKKAAAPKAAPAAEAAPAAEAPAAPVVEAAAE. Over residues 243–271 the composition is skewed to low complexity; that stretch reads AAAPKAAPAAEAAPAAEAPAAPVVEAAAE.

This sequence belongs to the universal ribosomal protein uS2 family.

This is Small ribosomal subunit protein uS2 from Nitratidesulfovibrio vulgaris (strain DSM 19637 / Miyazaki F) (Desulfovibrio vulgaris).